The primary structure comprises 122 residues: Probable glycine cleavage system H protein (122 aa).

The 82-residue stretch at 23 to 104 (IATVGITDYA…PYGNWLVKMK (82 aa)) folds into the Lipoyl-binding domain. Lys64 carries the N6-lipoyllysine modification.

The protein belongs to the GcvH family. The glycine cleavage system is composed of four proteins: P, T, L and H. The cofactor is (R)-lipoate.

The glycine cleavage system catalyzes the degradation of glycine. The H protein shuttles the methylamine group of glycine from the P protein to the T protein. This Thermoplasma volcanium (strain ATCC 51530 / DSM 4299 / JCM 9571 / NBRC 15438 / GSS1) protein is Probable glycine cleavage system H protein.